Here is a 95-residue protein sequence, read N- to C-terminus: Large ribosomal subunit protein bL25 (95 aa).

This sequence belongs to the bacterial ribosomal protein bL25 family. In terms of assembly, part of the 50S ribosomal subunit; part of the 5S rRNA/L5/L18/L25 subcomplex. Contacts the 5S rRNA. Binds to the 5S rRNA independently of L5 and L18.

In terms of biological role, this is one of the proteins that binds to the 5S RNA in the ribosome where it forms part of the central protuberance. The chain is Large ribosomal subunit protein bL25 from Shewanella oneidensis (strain ATCC 700550 / JCM 31522 / CIP 106686 / LMG 19005 / NCIMB 14063 / MR-1).